The primary structure comprises 523 residues: Chitinase Chi52 (523 aa).

Positions 1–30 (MNQAVRFRPVITFALAFLLLITWFAPRADA) are cleaved as a signal peptide. Residues 80-101 (GSGGETPTPDTAPPSVPAGLTS) are disordered. A Fibronectin type-III domain is found at 95–180 (VPAGLTSSSI…TSLSVTTSNG (86 aa)). The 324-residue stretch at 190–513 (KWLIGYWHNF…SAHRPFLNGL (324 aa)) folds into the GH18 domain. Glu-302 serves as the catalytic Proton donor.

This sequence belongs to the glycosyl hydrolase 18 family. Chitinase class II subfamily.

The catalysed reaction is Random endo-hydrolysis of N-acetyl-beta-D-glucosaminide (1-&gt;4)-beta-linkages in chitin and chitodextrins.. Its activity is regulated as follows. Activity is inhibited by Cu(2+) and Co(2+), and almost completely inhibited by SDS. Functionally, acidic chitinase that displays a broad substrate specificity, showing the highest specific activity toward colloidal chitin, followed by ethylene glycol chitin and ball milled chitin, but exhibits no activity toward powdery chitin and chitosan. Hydrolyzes colloidal chitin and chitooligosaccharides with degree of polymerization 2-5 to release mainly N-acetyl chitobiose. Displays inhibition effects on the growth of some phytopathogenic fungi, including Alternaria alstroemeriae, Botrytis cinerea, Rhizoctonia solani, Sclerotinia sclerotiorum and Valsa mali. In Paenibacillus xylanexedens, this protein is Chitinase Chi52.